A 190-amino-acid polypeptide reads, in one-letter code: dCTP deaminase, dUMP-forming (190 aa).

DCTP-binding positions include 101-106 (KSSLGR), Asp-119, 127-129 (TLE), Gln-148, Tyr-162, and Gln-174. Catalysis depends on Glu-129, which acts as the Proton donor/acceptor. Residues 161 to 190 (PYGSSGVGSKYQGQRGPTPSRSYQNFIRST) are disordered. Residues 171 to 190 (YQGQRGPTPSRSYQNFIRST) are compositionally biased toward polar residues.

It belongs to the dCTP deaminase family. Homotrimer.

The enzyme catalyses dCTP + 2 H2O = dUMP + NH4(+) + diphosphate. It participates in pyrimidine metabolism; dUMP biosynthesis; dUMP from dCTP: step 1/1. Functionally, bifunctional enzyme that catalyzes both the deamination of dCTP to dUTP and the hydrolysis of dUTP to dUMP without releasing the toxic dUTP intermediate. This Mycobacterium marinum (strain ATCC BAA-535 / M) protein is dCTP deaminase, dUMP-forming.